Reading from the N-terminus, the 375-residue chain is Tryptophan dimethylallyltransferase (375 aa).

Residues Ile83–Leu84 and Glu92 each bind L-tryptophan. Arg103, Lys189, and Tyr191 together coordinate substrate. The L-tryptophan site is built by Tyr193 and Arg246. The substrate site is built by Arg259, Lys261, Tyr263, Gln345, and Tyr347.

Belongs to the tryptophan dimethylallyltransferase family. In terms of assembly, homodimer.

The enzyme catalyses L-tryptophan + dimethylallyl diphosphate = 4-(3-methylbut-2-enyl)-L-tryptophan + diphosphate. Its pathway is alkaloid biosynthesis; ergot alkaloid biosynthesis. Tryptophan dimethylallyltransferase; part of the gene cluster that mediates the biosynthesis of fungal ergot alkaloid. DmaW catalyzes the first step of ergot alkaloid biosynthesis by condensing dimethylallyl diphosphate (DMAP) and tryptophan to form 4-dimethylallyl-L-tryptophan. The second step is catalyzed by the methyltransferase easF that methylates 4-dimethylallyl-L-tryptophan in the presence of S-adenosyl-L-methionine, resulting in the formation of 4-dimethylallyl-L-abrine. The catalase easC and the FAD-dependent oxidoreductase easE then transform 4-dimethylallyl-L-abrine to chanoclavine-I which is further oxidized by easD in the presence of NAD(+), resulting in the formation of chanoclavine-I aldehyde. Chanoclavine-I aldehyde is the precursor of ergoamides and ergopeptines in Clavicipitaceae, and clavine-type alcaloids such as fumiclavine in Trichocomaceae. However, the metabolites downstream of chanoclavine-I aldehyde in Arthrodermataceae have not been identified yet. The sequence is that of Tryptophan dimethylallyltransferase from Trichophyton verrucosum (strain HKI 0517).